A 97-amino-acid polypeptide reads, in one-letter code: Aspartyl/glutamyl-tRNA(Asn/Gln) amidotransferase subunit C (97 aa).

Belongs to the GatC family. In terms of assembly, heterotrimer of A, B and C subunits.

The catalysed reaction is L-glutamyl-tRNA(Gln) + L-glutamine + ATP + H2O = L-glutaminyl-tRNA(Gln) + L-glutamate + ADP + phosphate + H(+). The enzyme catalyses L-aspartyl-tRNA(Asn) + L-glutamine + ATP + H2O = L-asparaginyl-tRNA(Asn) + L-glutamate + ADP + phosphate + 2 H(+). In terms of biological role, allows the formation of correctly charged Asn-tRNA(Asn) or Gln-tRNA(Gln) through the transamidation of misacylated Asp-tRNA(Asn) or Glu-tRNA(Gln) in organisms which lack either or both of asparaginyl-tRNA or glutaminyl-tRNA synthetases. The reaction takes place in the presence of glutamine and ATP through an activated phospho-Asp-tRNA(Asn) or phospho-Glu-tRNA(Gln). This chain is Aspartyl/glutamyl-tRNA(Asn/Gln) amidotransferase subunit C, found in Sulfolobus acidocaldarius (strain ATCC 33909 / DSM 639 / JCM 8929 / NBRC 15157 / NCIMB 11770).